A 381-amino-acid chain; its full sequence is Cytochrome b (381 aa).

4 helical membrane-spanning segments follow: residues 34–54, 78–99, 114–134, and 179–199; these read FGSLLGLCLIIQILTGLFLAM, WLIRNIHANGASLFFICVYLHI, WNIGVILLFLLMATAFVGYVL, and FFAFHFLLPFLILALTIIHLL. Positions 84 and 98 each coordinate heme b. Heme b-binding residues include H183 and H197. Position 202 (H202) interacts with a ubiquinone. The next 4 helical transmembrane spans lie at 227 to 247, 289 to 309, 321 to 341, and 348 to 368; these read YKDLLGFFVMIFFLTTLALFM, LGGVLALLFSIFILMLVPLLH, LTQIFFWLLVANSIILTWIGG, and FITVGQIASVSYFSLFLIIMP.

It belongs to the cytochrome b family. In terms of assembly, the cytochrome bc1 complex contains 3 respiratory subunits (MT-CYB, CYC1 and UQCRFS1), 2 core proteins (UQCRC1 and UQCRC2) and probably 6 low-molecular weight proteins. Requires heme b as cofactor.

The protein localises to the mitochondrion inner membrane. In terms of biological role, component of the ubiquinol-cytochrome c reductase complex (complex III or cytochrome b-c1 complex) that is part of the mitochondrial respiratory chain. The b-c1 complex mediates electron transfer from ubiquinol to cytochrome c. Contributes to the generation of a proton gradient across the mitochondrial membrane that is then used for ATP synthesis. The polypeptide is Cytochrome b (mt-cyb) (Sphyrna tiburo tiburo (Hammerhead shark)).